Consider the following 197-residue polypeptide: Putative phosphopantothenoylcysteine decarboxylase (197 aa).

FMN contacts are provided by residues Phe-52 and 102 to 105; that span reads SANT. Asn-139 is a binding site for substrate. Cys-174 acts as the Proton donor in catalysis.

Belongs to the HFCD (homooligomeric flavin containing Cys decarboxylase) superfamily. As to quaternary structure, homotrimer. It depends on FMN as a cofactor.

It catalyses the reaction N-[(R)-4-phosphopantothenoyl]-L-cysteine + H(+) = (R)-4'-phosphopantetheine + CO2. Its pathway is cofactor biosynthesis; coenzyme A biosynthesis; CoA from (R)-pantothenate: step 3/5. Necessary for the biosynthesis of coenzyme A. Catalyzes the decarboxylation of 4-phosphopantothenoylcysteine to form 4'-phosphopantotheine. In Dictyostelium discoideum (Social amoeba), this protein is Putative phosphopantothenoylcysteine decarboxylase (ppcdc).